Reading from the N-terminus, the 234-residue chain is uncharacterized protein (234 aa).

Disordered stretches follow at residues M1 to P65 and A182 to T234.

This is an uncharacterized protein from Homo sapiens (Human).